We begin with the raw amino-acid sequence, 363 residues long: 3-isopropylmalate dehydrogenase (363 aa).

78–91 is a binding site for NAD(+); the sequence is GPKWEHLPPAEQPE. Substrate contacts are provided by R99, R109, R138, and D227. Mg(2+) contacts are provided by D227, D251, and D255. 285 to 297 contacts NAD(+); sequence GSAPDIAGKGIAN.

The protein belongs to the isocitrate and isopropylmalate dehydrogenases family. LeuB type 1 subfamily. As to quaternary structure, homodimer. It depends on Mg(2+) as a cofactor. The cofactor is Mn(2+).

It is found in the cytoplasm. It carries out the reaction (2R,3S)-3-isopropylmalate + NAD(+) = 4-methyl-2-oxopentanoate + CO2 + NADH. It participates in amino-acid biosynthesis; L-leucine biosynthesis; L-leucine from 3-methyl-2-oxobutanoate: step 3/4. Functionally, catalyzes the oxidation of 3-carboxy-2-hydroxy-4-methylpentanoate (3-isopropylmalate) to 3-carboxy-4-methyl-2-oxopentanoate. The product decarboxylates to 4-methyl-2 oxopentanoate. This is 3-isopropylmalate dehydrogenase from Photorhabdus laumondii subsp. laumondii (strain DSM 15139 / CIP 105565 / TT01) (Photorhabdus luminescens subsp. laumondii).